The following is a 511-amino-acid chain: Phospho-2-dehydro-3-deoxyheptonate aldolase 1, chloroplastic (511 aa).

The N-terminal 49 residues, 1 to 49, are a transit peptide targeting the chloroplast; it reads MALSNTLSLSSSKSLVQSHLLHNPTPQPRFSLFPTTQHGRRHPISAVHA.

It belongs to the class-II DAHP synthase family. As to expression, higher levels seen in the cotyledons than in the leaves and flowers. Lower levels seen in the roots and stems.

The protein localises to the plastid. It is found in the chloroplast. The enzyme catalyses D-erythrose 4-phosphate + phosphoenolpyruvate + H2O = 7-phospho-2-dehydro-3-deoxy-D-arabino-heptonate + phosphate. It functions in the pathway metabolic intermediate biosynthesis; chorismate biosynthesis; chorismate from D-erythrose 4-phosphate and phosphoenolpyruvate: step 1/7. May be involved in the synthesis of secondary metabolites derived from intermediates of the pre-chorismate pathway up to shikimate. The chain is Phospho-2-dehydro-3-deoxyheptonate aldolase 1, chloroplastic from Solanum lycopersicum (Tomato).